Reading from the N-terminus, the 262-residue chain is Phosphomannomutase 1 (262 aa).

A2 is modified (N-acetylalanine). The Nucleophile role is filled by D19. Positions 19 and 21 each coordinate Mg(2+). D21 (proton donor/acceptor) is an active-site residue. R28, R132, R143, R150, M186, S188, and D190 together coordinate alpha-D-mannose 1-phosphate. The Mg(2+) site is built by N218, F230, D232, and T235. S242 is modified (phosphoserine).

The protein belongs to the eukaryotic PMM family. Homodimer. Mg(2+) serves as cofactor. In terms of tissue distribution, strong expression in liver, heart, brain, and pancreas; lower expression in skeletal muscle.

It localises to the cytoplasm. It carries out the reaction alpha-D-mannose 1-phosphate = D-mannose 6-phosphate. Its pathway is nucleotide-sugar biosynthesis; GDP-alpha-D-mannose biosynthesis; alpha-D-mannose 1-phosphate from D-fructose 6-phosphate: step 2/2. Its activity is regulated as follows. IMP, a metabolite whose concentration is elevated in anoxia, inhibits phosphomannomutase and phosphoglucomutase activities and strongly enhances glucose-1,6-bisphosphatase activity. In terms of biological role, involved in the synthesis of the GDP-mannose and dolichol-phosphate-mannose required for a number of critical mannosyl transfer reactions. In addition, may be responsible for the degradation of glucose-1,6-bisphosphate in ischemic brain. The polypeptide is Phosphomannomutase 1 (PMM1) (Homo sapiens (Human)).